A 41-amino-acid chain; its full sequence is Large ribosomal subunit protein bL36 (41 aa).

Belongs to the bacterial ribosomal protein bL36 family.

The sequence is that of Large ribosomal subunit protein bL36 from Xanthomonas axonopodis pv. citri (strain 306).